We begin with the raw amino-acid sequence, 100 residues long: NAD(P)H-quinone oxidoreductase subunit 4L, chloroplastic (100 aa).

A run of 3 helical transmembrane segments spans residues methionine 1 to valine 21, methionine 31 to phenylalanine 51, and isoleucine 63 to isoleucine 83.

Belongs to the complex I subunit 4L family. In terms of assembly, NDH is composed of at least 16 different subunits, 5 of which are encoded in the nucleus.

Its subcellular location is the plastid. It is found in the chloroplast thylakoid membrane. The enzyme catalyses a plastoquinone + NADH + (n+1) H(+)(in) = a plastoquinol + NAD(+) + n H(+)(out). It catalyses the reaction a plastoquinone + NADPH + (n+1) H(+)(in) = a plastoquinol + NADP(+) + n H(+)(out). NDH shuttles electrons from NAD(P)H:plastoquinone, via FMN and iron-sulfur (Fe-S) centers, to quinones in the photosynthetic chain and possibly in a chloroplast respiratory chain. The immediate electron acceptor for the enzyme in this species is believed to be plastoquinone. Couples the redox reaction to proton translocation, and thus conserves the redox energy in a proton gradient. The protein is NAD(P)H-quinone oxidoreductase subunit 4L, chloroplastic of Cryptomeria japonica (Japanese cedar).